Reading from the N-terminus, the 201-residue chain is dITP/XTP pyrophosphatase (201 aa).

A substrate-binding site is contributed by 8-13 (TNNENK). Mg(2+) is bound by residues Glu-41 and Asp-73. Asp-73 (proton acceptor) is an active-site residue. Residues Ser-74, 154–157 (FGYD), Lys-177, and 182–183 (HR) contribute to the substrate site.

Belongs to the HAM1 NTPase family. In terms of assembly, homodimer. Mg(2+) is required as a cofactor.

It catalyses the reaction XTP + H2O = XMP + diphosphate + H(+). The catalysed reaction is dITP + H2O = dIMP + diphosphate + H(+). It carries out the reaction ITP + H2O = IMP + diphosphate + H(+). Functionally, pyrophosphatase that catalyzes the hydrolysis of nucleoside triphosphates to their monophosphate derivatives, with a high preference for the non-canonical purine nucleotides XTP (xanthosine triphosphate), dITP (deoxyinosine triphosphate) and ITP. Seems to function as a house-cleaning enzyme that removes non-canonical purine nucleotides from the nucleotide pool, thus preventing their incorporation into DNA/RNA and avoiding chromosomal lesions. This Clostridium tetani (strain Massachusetts / E88) protein is dITP/XTP pyrophosphatase.